Reading from the N-terminus, the 152-residue chain is Large ribosomal subunit protein bL9 (152 aa).

It belongs to the bacterial ribosomal protein bL9 family.

Functionally, binds to the 23S rRNA. This is Large ribosomal subunit protein bL9 from Streptococcus thermophilus (strain ATCC BAA-491 / LMD-9).